The chain runs to 345 residues: MRKNEMSTSKQAIQWKCLESKIESKRLHYGRFLVSPFKRGQASTVGIAMRRALLQEIEGTSITCARFCGVVHEYSTITGLQETIHDVLVNLKEIVLRGDSKEDIQEAFLSVTGPKEVTAGDLSLPPGVEAIDNSQYIATITQPISLTIELEIEKDCGYRIENLAKSGKGQFPIDAVFMPVRNVNYSIHLFGSGRATQEILFIEIWTNGSLTPHEALRKASEKLMDLLTTFLYVRGGDVSLFENGEDSLDLTKSPSLQPQFGDTNNLEERVLENRFIDQLELPARAFNCLKRAEIYTIADLLNYSREDLSKLKNFGRKSVDQVSEALWDRFAKELPDKKIVLNRRK.

Residues Met1–Arg234 are alpha N-terminal domain (alpha-NTD). Positions Leu266–Lys345 are alpha C-terminal domain (alpha-CTD).

This sequence belongs to the RNA polymerase alpha chain family. In plastids the minimal PEP RNA polymerase catalytic core is composed of four subunits: alpha, beta, beta', and beta''. When a (nuclear-encoded) sigma factor is associated with the core the holoenzyme is formed, which can initiate transcription.

The protein resides in the plastid. Its subcellular location is the chloroplast. The enzyme catalyses RNA(n) + a ribonucleoside 5'-triphosphate = RNA(n+1) + diphosphate. In terms of biological role, DNA-dependent RNA polymerase catalyzes the transcription of DNA into RNA using the four ribonucleoside triphosphates as substrates. The protein is DNA-directed RNA polymerase subunit alpha of Adiantum capillus-veneris (Maidenhair fern).